The primary structure comprises 512 residues: ATP synthase subunit alpha (512 aa).

169–176 (GDRQTGKT) contacts ATP.

The protein belongs to the ATPase alpha/beta chains family. As to quaternary structure, F-type ATPases have 2 components, CF(1) - the catalytic core - and CF(0) - the membrane proton channel. CF(1) has five subunits: alpha(3), beta(3), gamma(1), delta(1), epsilon(1). CF(0) has three main subunits: a(1), b(2) and c(9-12). The alpha and beta chains form an alternating ring which encloses part of the gamma chain. CF(1) is attached to CF(0) by a central stalk formed by the gamma and epsilon chains, while a peripheral stalk is formed by the delta and b chains.

It localises to the cell membrane. The catalysed reaction is ATP + H2O + 4 H(+)(in) = ADP + phosphate + 5 H(+)(out). In terms of biological role, produces ATP from ADP in the presence of a proton gradient across the membrane. The alpha chain is a regulatory subunit. In Buchnera aphidicola subsp. Acyrthosiphon pisum (strain 5A), this protein is ATP synthase subunit alpha.